Consider the following 726-residue polypeptide: WD repeat and coiled-coil-containing protein (726 aa).

WD repeat units follow at residues 55 to 98 (GQFE…SDKN) and 154 to 194 (KSSG…LNAC). The tract at residues 502-574 (RSYDGDQSPT…PNFIQPSDVS (73 aa)) is disordered. Positions 506–515 (GDQSPTSSAN) are enriched in polar residues. Positions 517–533 (FDEKRNRLRMESFDTEP) are enriched in basic and acidic residues. Over residues 550–574 (SGSTSPKSECQNSSPPNFIQPSDVS) the composition is skewed to polar residues. The stretch at 581–609 (SISRNVERLCCNFAHLQQHLSELTDITRN) forms a coiled coil.

The sequence is that of WD repeat and coiled-coil-containing protein (wdcp) from Xenopus laevis (African clawed frog).